Here is a 518-residue protein sequence, read N- to C-terminus: T-box transcription factor TBX5 (518 aa).

Residues 1–46 (MADADEGFGLAHTPLEPDAKDLPCDSKPESALGAPSKSPSSPQAAF) form a disordered region. A compositionally biased stretch (basic and acidic residues) spans 15–28 (LEPDAKDLPCDSKP). Low complexity predominate over residues 34 to 45 (APSKSPSSPQAA). The T-box DNA-binding region spans 58 to 238 (LHERELWLKF…NNPFAKGFRG (181 aa)). The interval 250-356 (MQSKEYPVVP…PSEEDSFYRS (107 aa)) is disordered. Over residues 262 to 301 (TVRQKVASNHSPFSSESRALSTSSNLGSQYQCENGVSGPS) the composition is skewed to polar residues. Lysine 339 is subject to N6-acetyllysine.

As to quaternary structure, monomer. Homodimer (via the T-box); binds DNA as homodimer. Interacts (via the T-box) with NKX2-5 (via the homeobox); this complex binds DNA. Interacts with GATA4. Interacts with KAT2A and KAT2B. In terms of processing, acetylation at Lys-339 by KAT2A and KAT2B promotes nuclear retention.

The protein resides in the nucleus. It is found in the cytoplasm. Functionally, DNA-binding protein that regulates the transcription of several genes and is involved in heart development and limb pattern formation. Binds to the core DNA motif of NPPA promoter. This is T-box transcription factor TBX5 (TBX5) from Homo sapiens (Human).